A 314-amino-acid polypeptide reads, in one-letter code: 4-hydroxy-3-methylbut-2-enyl diphosphate reductase (314 aa).

[4Fe-4S] cluster is bound at residue cysteine 12. (2E)-4-hydroxy-3-methylbut-2-enyl diphosphate contacts are provided by histidine 41 and histidine 74. 2 residues coordinate dimethylallyl diphosphate: histidine 41 and histidine 74. Isopentenyl diphosphate-binding residues include histidine 41 and histidine 74. Position 96 (cysteine 96) interacts with [4Fe-4S] cluster. A (2E)-4-hydroxy-3-methylbut-2-enyl diphosphate-binding site is contributed by histidine 124. A dimethylallyl diphosphate-binding site is contributed by histidine 124. Position 124 (histidine 124) interacts with isopentenyl diphosphate. Glutamate 126 functions as the Proton donor in the catalytic mechanism. Threonine 168 contacts (2E)-4-hydroxy-3-methylbut-2-enyl diphosphate. Cysteine 198 provides a ligand contact to [4Fe-4S] cluster. (2E)-4-hydroxy-3-methylbut-2-enyl diphosphate-binding residues include serine 226, serine 227, asparagine 228, and serine 270. Positions 226, 227, 228, and 270 each coordinate dimethylallyl diphosphate. Positions 226, 227, 228, and 270 each coordinate isopentenyl diphosphate.

The protein belongs to the IspH family. [4Fe-4S] cluster is required as a cofactor.

It catalyses the reaction isopentenyl diphosphate + 2 oxidized [2Fe-2S]-[ferredoxin] + H2O = (2E)-4-hydroxy-3-methylbut-2-enyl diphosphate + 2 reduced [2Fe-2S]-[ferredoxin] + 2 H(+). It carries out the reaction dimethylallyl diphosphate + 2 oxidized [2Fe-2S]-[ferredoxin] + H2O = (2E)-4-hydroxy-3-methylbut-2-enyl diphosphate + 2 reduced [2Fe-2S]-[ferredoxin] + 2 H(+). It functions in the pathway isoprenoid biosynthesis; dimethylallyl diphosphate biosynthesis; dimethylallyl diphosphate from (2E)-4-hydroxy-3-methylbutenyl diphosphate: step 1/1. The protein operates within isoprenoid biosynthesis; isopentenyl diphosphate biosynthesis via DXP pathway; isopentenyl diphosphate from 1-deoxy-D-xylulose 5-phosphate: step 6/6. Catalyzes the conversion of 1-hydroxy-2-methyl-2-(E)-butenyl 4-diphosphate (HMBPP) into a mixture of isopentenyl diphosphate (IPP) and dimethylallyl diphosphate (DMAPP). Acts in the terminal step of the DOXP/MEP pathway for isoprenoid precursor biosynthesis. In Ectopseudomonas mendocina (strain ymp) (Pseudomonas mendocina), this protein is 4-hydroxy-3-methylbut-2-enyl diphosphate reductase.